Consider the following 333-residue polypeptide: Dioxygenase cnsJ (333 aa).

The Fe cation site is built by His-153, Asp-155, and His-235. The interval 309–333 (NAQPEGEDDGGMKPNEGEHVVEAQI) is disordered. Basic and acidic residues predominate over residues 323–333 (NEGEHVVEAQI).

This sequence belongs to the PhyH family. As to quaternary structure, homodimer. It depends on Fe cation as a cofactor.

The protein operates within alkaloid biosynthesis. Its function is as follows. Dioxygenase; part of the gene cluster that mediates the biosynthesis of communesins, a prominent class of indole alkaloids with great potential as pharmaceuticals. Communesins are biosynthesized by the coupling of tryptamine and aurantioclavine, two building blocks derived from L-tryptophan. The L-tryptophan decarboxylase cnsB converts L-tryptophan to tryptamine, whereas the tryptophan dimethylallyltransferase cnsF converts L-tryptophan to 4-dimethylallyl tryptophan which is further transformed to aurantioclavine by the aurantioclavine synthase cnsA, probably aided by the catalase cnsD. The cytochrome P450 monooxygenase cnsC catalyzes the heterodimeric coupling between the two different indole moieties, tryptamine and aurantioclavine, to construct vicinal quaternary stereocenters and yield the heptacyclic communesin scaffold. The O-methyltransferase cnsE then methylates the communesin scaffold to produce communesin K, the simplest characterized communesin that contains the heptacyclic core. The dioxygenase cnsJ converts communesin K into communesin I. Acylation to introduce the hexadienyl group at position N16 of communesin I by the acyltransferase cnsK leads to the production of communesin B. The hexadienyl group is produced by the highly reducing polyketide synthase cnsI, before being hydrolytically removed from cnsI by the serine hydrolase cnsH, converted into hexadienyl-CoA by the CoA ligase cnsG, and then transferred to communesin I by cnsK. Surprisingly, cnsK may also be a promiscuous acyltransferase that can tolerate a range of acyl groups, including acetyl-, propionyl-, and butyryl-CoA, which lead to communesins A, G and H respectively. The roles of the alpha-ketoglutarate-dependent dioxygenases cnsM and cnsP have still to be determined. The sequence is that of Dioxygenase cnsJ from Penicillium expansum (Blue mold rot fungus).